A 155-amino-acid polypeptide reads, in one-letter code: Protein E6 (155 aa).

2 zinc fingers span residues 33–69 and 106–142; these read CVYC…CRVC and CYRC…CLQC.

Belongs to the papillomaviridae E6 protein family. As to quaternary structure, forms homodimers. Interacts with ubiquitin-protein ligase UBE3A/E6-AP; this interaction stimulates UBE3A ubiquitin activity. Interacts with host TP53 and EP300; this interaction inhibits TP53 activity.

Its subcellular location is the host cytoplasm. The protein resides in the host nucleus. Plays a major role in the induction and maintenance of cellular transformation. E6 associates with host UBE3A/E6-AP ubiquitin-protein ligase and modulates its activity. Sequesters tumor suppressor TP53 in the host cytoplasm and modulates its activity by interacting with host EP300 that results in the reduction of TP53 acetylation and activation. In turn, apoptosis induced by DNA damage is inhibited. E6 also protects host keratinocytes from apoptosis by mediating the degradation of host BAK1. May also inhibit host immune response. The sequence is that of Protein E6 from Homo sapiens (Human).